Consider the following 249-residue polypeptide: ATP synthase subunit a (249 aa).

6 helical membrane-spanning segments follow: residues 30–50, 84–104, 114–134, 143–163, 196–216, and 221–241; these read SAYM…GVAG, FFPL…VGII, LIVT…YGFY, IFVP…IEVF, LLAG…GMVI, and LELL…CIYL.

This sequence belongs to the ATPase A chain family. F-type ATPases have 2 components, CF(1) - the catalytic core - and CF(0) - the membrane proton channel. CF(1) has five subunits: alpha(3), beta(3), gamma(1), delta(1), epsilon(1). CF(0) has four main subunits: a, b, b' and c.

It is found in the cell inner membrane. In terms of biological role, key component of the proton channel; it plays a direct role in the translocation of protons across the membrane. This is ATP synthase subunit a from Rhodopseudomonas palustris (strain BisB18).